The following is a 215-amino-acid chain: Unique short US11 glycoprotein (215 aa).

The segment at residues 1-17 is a signal peptide (partially cleaved); the sequence is MNLVMLILALWAPVAGS. Over 18 to 182 the chain is Lumenal; it reads MPELSLTLFD…YYALTIKSAQ (165 aa). The 100-residue stretch at 47-146 folds into the Ig-like H-type domain; sequence YRVEYSEARC…TYYVECEPRC (100 aa). Cysteines 56 and 142 form a disulfide. Asn-73 is a glycosylation site (N-linked (GlcNAc...) asparagine; by host). A helical membrane pass occupies residues 183-203; it reads YTLMMVAVIQVFWGLYVKGWL. Residues 204-215 lie on the Cytoplasmic side of the membrane; that stretch reads HRHFPWMFSDQW.

This sequence belongs to the cytomegalovirus US6 family. In terms of assembly, interacts with host TRAM1. Post-translationally, N-glycosylated. In terms of processing, a fraction of newly synthesized molecules retain the signal peptide after the N-linked glycan has been attached and translation of the polypeptide has been completed. Delayed cleavage of the signal peptide is determined by the first four residues, as well as by the transmembrane region.

It localises to the host endoplasmic reticulum membrane. Functionally, participates in the inhibition of the host immune response. Redirects newly synthesized major histocompatibility complex (MHC) class I heavy chains via the SEC61 translocon to the cytosol where they undergo proteasome-dependent destruction. In consequence, infected cells are masked for immune recognition by cytotoxic T-lymphocytes. The protein is Unique short US11 glycoprotein (US11) of Human cytomegalovirus (strain AD169) (HHV-5).